A 459-amino-acid polypeptide reads, in one-letter code: Interleukin-7 receptor subunit alpha (459 aa).

An N-terminal signal peptide occupies residues 1-20; that stretch reads MTILGTTFGVFFSLLQVVSG. The Extracellular portion of the chain corresponds to 21-241; sequence ESGYAQNGDL…NNHSGETNPT (221 aa). Residues Cys-42 and Cys-57 are joined by a disulfide bond. Asn-49 and Asn-65 each carry an N-linked (GlcNAc...) asparagine glycan. Cystine bridges form between Cys-74–Cys-82 and Cys-108–Cys-118. The 101-residue stretch at 131–231 folds into the Fibronectin type-III domain; it reads APFDLSVIYR…PSYYFRTPEI (101 aa). Residue Asn-182 is glycosylated (N-linked (GlcNAc...) asparagine). The WSXWS motif motif lies at 217 to 221; that stretch reads WSEWS. The helical transmembrane segment at 242–262 threads the bilayer; the sequence is LLTISILSVLSVVLLVILACV. Topologically, residues 263 to 459 are cytoplasmic; sequence LWKKRIKPII…VTMSSFCQKR (197 aa). The Box 1 motif signature appears at 272 to 280; that stretch reads IWPSLPDHK. Thr-282 bears the Phosphothreonine; by PKC mark. The tract at residues 327 to 357 is disordered; the sequence is TVPPQLEESETQRPGGDVQSPSWPSENVVTT. Polar residues predominate over residues 345–357; it reads QSPSWPSENVVTT.

Belongs to the type I cytokine receptor family. Type 4 subfamily. The IL7 receptor is a heterodimer of IL7R and IL2RG. The TSLP receptor is a heterodimer of CRLF2 and IL7R. Interacts with CD53. Post-translationally, N-glycosylated IL-7Ralpha binds IL7 300-fold more tightly than the unglycosylated form. Ubiquitinated by MARCHF8; leading to lysosomal degradation.

The protein resides in the cell membrane. Functionally, receptor for interleukin-7. Also acts as a receptor for thymic stromal lymphopoietin (TSLP). This is Interleukin-7 receptor subunit alpha (IL7R) from Callithrix jacchus (White-tufted-ear marmoset).